The following is a 52-amino-acid chain: ATP synthase protein 8 (52 aa).

Residues 6–26 form a helical membrane-spanning segment; it reads PLLWLNLFLMFSATFVMFIVL.

It belongs to the ATPase protein 8 family. As to quaternary structure, F-type ATPases have 2 components, CF(1) - the catalytic core - and CF(0) - the membrane proton channel.

Its subcellular location is the mitochondrion membrane. Its function is as follows. Mitochondrial membrane ATP synthase (F(1)F(0) ATP synthase or Complex V) produces ATP from ADP in the presence of a proton gradient across the membrane which is generated by electron transport complexes of the respiratory chain. F-type ATPases consist of two structural domains, F(1) - containing the extramembraneous catalytic core and F(0) - containing the membrane proton channel, linked together by a central stalk and a peripheral stalk. During catalysis, ATP synthesis in the catalytic domain of F(1) is coupled via a rotary mechanism of the central stalk subunits to proton translocation. Part of the complex F(0) domain. Minor subunit located with subunit a in the membrane. The protein is ATP synthase protein 8 (MT-ATP8) of Penaeus monodon (Giant tiger prawn).